Reading from the N-terminus, the 326-residue chain is Ras association domain-containing protein 2 (326 aa).

One can recognise a Ras-associating domain in the interval 176 to 264; it reads YNHKTSVFTP…SKVFLMEKDQ (89 aa). In terms of domain architecture, SARAH spans 272-319; that stretch reads VAQYIKFEMPVLKSFIQKLQEEEDREVEKLMRKYTVLRLMIRQRLEEI.

Interacts directly with activated KRAS in a GTP-dependent manner. Interacts (via SARAH domain) with STK3/MST2 and STK4/MST1. Post-translationally, phosphorylated by STK3/MST2 and STK4/MST1.

It is found in the nucleus. The protein localises to the cytoplasm. The protein resides in the chromosome. Its subcellular location is the centromere. It localises to the kinetochore. Functionally, potential tumor suppressor. Acts as a KRAS-specific effector protein. May promote apoptosis and cell cycle arrest. Stabilizes STK3/MST2 by protecting it from proteasomal degradation. The sequence is that of Ras association domain-containing protein 2 (Rassf2) from Mus musculus (Mouse).